The chain runs to 732 residues: X-ray repair cross-complementing protein 5 (732 aa).

The 223-residue stretch at 9–231 (AVVLCMDVGF…DEIYSFSESL (223 aa)) folds into the VWFA domain. The interval 138-165 (LSSRFSKSQLDIIIHSLKKCDISLQFFL) is leucine-zipper. An N6-acetyllysine modification is found at Lys144. Residue Lys195 forms a Glycyl lysine isopeptide (Lys-Gly) (interchain with G-Cter in SUMO2) linkage. A Ku domain is found at 253 to 452 (IGSNLSIRIA…KYAPTEAQLN (200 aa)). Phosphoserine occurs at positions 255 and 258. Lys265 carries the N6-acetyllysine modification. Phosphoserine is present on Ser318. Lys332 is modified (N6-acetyllysine). Glycyl lysine isopeptide (Lys-Gly) (interchain with G-Cter in SUMO2) cross-links involve residues Lys532 and Lys534. Position 535 is a phosphothreonine (Thr535). Residues Lys566 and Lys568 each participate in a glycyl lysine isopeptide (Lys-Gly) (interchain with G-Cter in SUMO2) cross-link. Residues Ser577, Ser579, and Ser580 each carry the phosphoserine; by PRKDC modification. An N6-acetyllysine mark is found at Lys660 and Lys665. Glycyl lysine isopeptide (Lys-Gly) (interchain with G-Cter in SUMO2) cross-links involve residues Lys669 and Lys688. Thr715 carries the phosphothreonine; by PRKDC modification. The EEXXXDL motif motif lies at 720-728 (EEGGDVDDL).

The protein belongs to the ku80 family. Heterodimer composed of XRCC5/Ku80 and XRCC6/Ku70; heterodimerization stabilizes XRCC5 protein. Component of the core long-range non-homologous end joining (NHEJ) complex (also named DNA-PK complex) composed of PRKDC, LIG4, XRCC4, XRCC6/Ku70, XRCC5/Ku86 and NHEJ1/XLF. Additional component of the NHEJ complex includes PAXX. Following autophosphorylation, PRKDC dissociates from DNA, leading to formation of the short-range NHEJ complex, composed of LIG4, XRCC4, XRCC6/Ku70, XRCC5/Ku86 and NHEJ1/XLF. The XRCC5-XRCC6 dimer also associates with NAA15, and this complex displays DNA binding activity towards the osteocalcin FGF response element (OCFRE). In addition, XRCC5 binds to the osteoblast-specific transcription factors MSX2 and RUNX2. Interacts with ELF3. Interacts with APLF (via KBM motif). The XRCC5/XRCC6 dimer associates in a DNA-dependent manner with APEX1. Identified in a complex with DEAF1 and XRCC6. Interacts with NR4A3; the DNA-dependent protein kinase complex DNA-PK phosphorylates and activates NR4A3 and prevents NR4A3 ubiquitinylation and degradation. Interacts with RNF138. Interacts with CYREN isoform 1 (CYREN-1) and isoform 4 (CYREN-2) (via KBM motif). Interacts with WRN (via KBM motif). Interacts (via N-terminus) with HSF1 (via N-terminus); this interaction is direct and prevents XRCC5/XRCC6 heterodimeric binding and non-homologous end joining (NHEJ) repair activities induced by ionizing radiation (IR). Interacts with DHX9; this interaction occurs in a RNA-dependent manner. Part of the HDP-RNP complex composed of at least HEXIM1, PRKDC, XRCC5, XRCC6, paraspeckle proteins (SFPQ, NONO, PSPC1, RBM14, and MATR3) and NEAT1 RNA. Interacts with ERCC6. The XRCC5-XRCC6 dimer associates with ALKBH2. Interacts with TPRN; TPRN interacts with a number of DNA damage response proteins, is recruited to sites of DNA damage and may play a role in DNA damage repair. Interacts with ERCC6L2. In terms of assembly, (Microbial infection) Interacts with human T-cell leukemia virus 1/HTLV-1 protein HBZ. In terms of processing, ADP-ribosylated by PARP3. Post-translationally, phosphorylated on serine residues. Phosphorylation by PRKDC may enhance helicase activity. Sumoylated. In terms of processing, ubiquitinated by RNF8 via 'Lys-48'-linked ubiquitination following DNA damage, leading to its degradation and removal from DNA damage sites. Ubiquitinated by RNF138, leading to remove the Ku complex from DNA breaks.

Its subcellular location is the nucleus. The protein resides in the nucleolus. It is found in the chromosome. Single-stranded DNA-dependent ATP-dependent helicase that plays a key role in DNA non-homologous end joining (NHEJ) by recruiting DNA-PK to DNA. Required for double-strand break repair and V(D)J recombination. Also has a role in chromosome translocation. The DNA helicase II complex binds preferentially to fork-like ends of double-stranded DNA in a cell cycle-dependent manner. It works in the 3'-5' direction. During NHEJ, the XRCC5-XRRC6 dimer performs the recognition step: it recognizes and binds to the broken ends of the DNA and protects them from further resection. Binding to DNA may be mediated by XRCC6. The XRCC5-XRRC6 dimer acts as a regulatory subunit of the DNA-dependent protein kinase complex DNA-PK by increasing the affinity of the catalytic subunit PRKDC to DNA by 100-fold. The XRCC5-XRRC6 dimer is probably involved in stabilizing broken DNA ends and bringing them together. The assembly of the DNA-PK complex to DNA ends is required for the NHEJ ligation step. The XRCC5-XRRC6 dimer probably also acts as a 5'-deoxyribose-5-phosphate lyase (5'-dRP lyase), by catalyzing the beta-elimination of the 5' deoxyribose-5-phosphate at an abasic site near double-strand breaks. XRCC5 probably acts as the catalytic subunit of 5'-dRP activity, and allows to 'clean' the termini of abasic sites, a class of nucleotide damage commonly associated with strand breaks, before such broken ends can be joined. The XRCC5-XRRC6 dimer together with APEX1 acts as a negative regulator of transcription. In association with NAA15, the XRCC5-XRRC6 dimer binds to the osteocalcin promoter and activates osteocalcin expression. As part of the DNA-PK complex, involved in the early steps of ribosome assembly by promoting the processing of precursor rRNA into mature 18S rRNA in the small-subunit processome. Binding to U3 small nucleolar RNA, recruits PRKDC and XRCC5/Ku86 to the small-subunit processome. Plays a role in the regulation of DNA virus-mediated innate immune response by assembling into the HDP-RNP complex, a complex that serves as a platform for IRF3 phosphorylation and subsequent innate immune response activation through the cGAS-STING pathway. The protein is X-ray repair cross-complementing protein 5 (XRCC5) of Homo sapiens (Human).